Reading from the N-terminus, the 1202-residue chain is PAN2-PAN3 deadenylation complex catalytic subunit PAN2 (1202 aa).

4 WD repeats span residues 153 to 193, 195 to 231, 244 to 280, and 328 to 367; these read DENE…QKYA, ETPG…VEHE, VHGN…AITP, and PVGP…SFNP. A linker region spans residues 368-485; sequence YSRETEFALP…VGREEEPHLH (118 aa). Positions 486-924 constitute a USP domain; that stretch reads MVSKKYRKVT…VPAILYYVKR (439 aa). Phosphoserine is present on S791. The 173-residue stretch at 975–1147 folds into the Exonuclease domain; that stretch reads VGLDAEFVTL…EDARTALQLY (173 aa). A divalent metal cation contacts are provided by D978, E980, D1087, and D1139. Position 1189 is a phosphoserine (S1189).

This sequence belongs to the peptidase C19 family. PAN2 subfamily. As to quaternary structure, forms a heterotrimer with an asymmetric homodimer of the regulatory subunit PAN3 to form the poly(A)-nuclease (PAN) deadenylation complex. Interacts with PAN3 isoform 1/Pan3L and isoform 3/Pan3S. Interacts with ZFP36. Requires a divalent metal cation as cofactor.

It localises to the cytoplasm. The protein localises to the P-body. The protein resides in the nucleus. The enzyme catalyses Exonucleolytic cleavage of poly(A) to 5'-AMP.. Positively regulated by the regulatory subunit PAN3. Functionally, catalytic subunit of the poly(A)-nuclease (PAN) deadenylation complex, one of two cytoplasmic mRNA deadenylases involved in general and miRNA-mediated mRNA turnover. PAN specifically shortens poly(A) tails of RNA and the activity is stimulated by poly(A)-binding protein (PABP). PAN deadenylation is followed by rapid degradation of the shortened mRNA tails by the CCR4-NOT complex. Deadenylated mRNAs are then degraded by two alternative mechanisms, namely exosome-mediated 3'-5' exonucleolytic degradation, or deadenylation-dependent mRNA decaping and subsequent 5'-3' exonucleolytic degradation by XRN1. Also acts as an important regulator of the HIF1A-mediated hypoxic response. Required for HIF1A mRNA stability independent of poly(A) tail length regulation. The sequence is that of PAN2-PAN3 deadenylation complex catalytic subunit PAN2 from Homo sapiens (Human).